The sequence spans 490 residues: Cytochrome P450 2C1 (490 aa).

Residue Cys435 participates in heme binding.

It belongs to the cytochrome P450 family. Requires heme as cofactor.

It localises to the endoplasmic reticulum membrane. The protein localises to the microsome membrane. The catalysed reaction is an organic molecule + reduced [NADPH--hemoprotein reductase] + O2 = an alcohol + oxidized [NADPH--hemoprotein reductase] + H2O + H(+). Cytochromes P450 are a group of heme-thiolate monooxygenases. In liver microsomes, this enzyme is involved in an NADPH-dependent electron transport pathway. It oxidizes a variety of structurally unrelated compounds, including steroids, fatty acids, and xenobiotics. The polypeptide is Cytochrome P450 2C1 (CYP2C1) (Oryctolagus cuniculus (Rabbit)).